The primary structure comprises 460 residues: Homocitrate synthase (460 aa).

One can recognise a Pyruvate carboxyltransferase domain in the interval 3–258; it reads VGILDSTLRE…IEVVKLNKLQ (256 aa). Position 11 (Arg-11) interacts with 2-oxoglutarate. Position 12 (Glu-12) interacts with Mg(2+). 2-oxoglutarate is bound by residues His-75, Arg-135, and Thr-169. Positions 197 and 199 each coordinate Mg(2+). His-291 functions as the Proton acceptor in the catalytic mechanism.

This sequence belongs to the alpha-IPM synthase/homocitrate synthase family. Homocitrate synthase LYS20/LYS21 subfamily. As to quaternary structure, forms a homotetramer in the absence of lysine, and is in hexadecamer-octamer equilibrium in the presence of lysine. Mg(2+) serves as cofactor. It depends on Mn(2+) as a cofactor.

It carries out the reaction acetyl-CoA + 2-oxoglutarate + H2O = (2R)-homocitrate + CoA + H(+). It functions in the pathway amino-acid biosynthesis; L-lysine biosynthesis via AAA pathway; L-alpha-aminoadipate from 2-oxoglutarate: step 1/5. Inhibited by lysine. In terms of biological role, catalyzes the aldol-type condensation of 2-oxoglutarate with acetyl-CoA to yield homocitrate. Carries out the first step of the alpha-aminoadipate (AAA) lysine biosynthesis pathway. The polypeptide is Homocitrate synthase (Sulfurisphaera tokodaii (strain DSM 16993 / JCM 10545 / NBRC 100140 / 7) (Sulfolobus tokodaii)).